A 291-amino-acid polypeptide reads, in one-letter code: 4-hydroxy-tetrahydrodipicolinate synthase (291 aa).

Residue T45 coordinates pyruvate. The active-site Proton donor/acceptor is the Y133. Catalysis depends on K161, which acts as the Schiff-base intermediate with substrate. Position 203 (I203) interacts with pyruvate.

Belongs to the DapA family. In terms of assembly, homotetramer; dimer of dimers.

It localises to the cytoplasm. It carries out the reaction L-aspartate 4-semialdehyde + pyruvate = (2S,4S)-4-hydroxy-2,3,4,5-tetrahydrodipicolinate + H2O + H(+). Its pathway is amino-acid biosynthesis; L-lysine biosynthesis via DAP pathway; (S)-tetrahydrodipicolinate from L-aspartate: step 3/4. Functionally, catalyzes the condensation of (S)-aspartate-beta-semialdehyde [(S)-ASA] and pyruvate to 4-hydroxy-tetrahydrodipicolinate (HTPA). In Acidithiobacillus ferrooxidans (strain ATCC 23270 / DSM 14882 / CIP 104768 / NCIMB 8455) (Ferrobacillus ferrooxidans (strain ATCC 23270)), this protein is 4-hydroxy-tetrahydrodipicolinate synthase.